We begin with the raw amino-acid sequence, 295 residues long: 4-hydroxy-tetrahydrodipicolinate synthase (295 aa).

Residue threonine 46 coordinates pyruvate. Tyrosine 134 (proton donor/acceptor) is an active-site residue. Catalysis depends on lysine 162, which acts as the Schiff-base intermediate with substrate. Isoleucine 205 is a binding site for pyruvate.

It belongs to the DapA family. In terms of assembly, homotetramer; dimer of dimers.

It localises to the cytoplasm. It carries out the reaction L-aspartate 4-semialdehyde + pyruvate = (2S,4S)-4-hydroxy-2,3,4,5-tetrahydrodipicolinate + H2O + H(+). It functions in the pathway amino-acid biosynthesis; L-lysine biosynthesis via DAP pathway; (S)-tetrahydrodipicolinate from L-aspartate: step 3/4. Catalyzes the condensation of (S)-aspartate-beta-semialdehyde [(S)-ASA] and pyruvate to 4-hydroxy-tetrahydrodipicolinate (HTPA). The chain is 4-hydroxy-tetrahydrodipicolinate synthase from Anaeromyxobacter dehalogenans (strain 2CP-1 / ATCC BAA-258).